The chain runs to 157 residues: Transcriptional repressor NrdR (157 aa).

The segment at 3 to 34 is a zinc-finger region; it reads CSNCQNKNTKVLDSRPIEEGRAIRRRRECERC. An ATP-cone domain is found at 49-139; the sequence is LIVVKKDGVR…VYRQFKDITV (91 aa).

Belongs to the NrdR family. Requires Zn(2+) as cofactor.

Negatively regulates transcription of bacterial ribonucleotide reductase nrd genes and operons by binding to NrdR-boxes. The chain is Transcriptional repressor NrdR from Oceanobacillus iheyensis (strain DSM 14371 / CIP 107618 / JCM 11309 / KCTC 3954 / HTE831).